The sequence spans 376 residues: Heat stress transcription factor A-2a (376 aa).

Residues 137 to 168 (LKTIKRRRPPPSSPPSSSSSSSSSQHQQQPAA) are disordered. A compositionally biased stretch (low complexity) spans 151-160 (PSSSSSSSSS). A coiled-coil region spans residues 182–229 (VNRLQRDKSVLIAEVVKLRQEQQTTRAQMQAMEERISAAEQKQQQMTV). The hydrophobic repeat HR-A/B stretch occupies residues 185–235 (LQRDKSVLIAEVVKLRQEQQTTRAQMQAMEERISAAEQKQQQMTVFLARAM). Positions 265-269 (KKRRR) match the Nuclear localization signal motif. Disordered stretches follow at residues 296 to 319 (VAEPDGDTTPRGDGGGGGGGDTES) and 332 to 362 (KQREDGVAGGVQESNSGGADVDNDEEDDDDD). The segment covering 307 to 316 (GDGGGGGGGD) has biased composition (gly residues). The short motif at 318–325 (ESFWMQLL) is the AHA element. A compositionally biased stretch (acidic residues) spans 352–362 (VDNDEEDDDDD). The Nuclear export signal signature appears at 366–373 (LVQSIYHL).

This sequence belongs to the HSF family. Class A subfamily. In terms of assembly, homotrimer. Post-translationally, exhibits temperature-dependent phosphorylation.

It localises to the cytoplasm. The protein localises to the nucleus. Functionally, transcriptional regulator that specifically binds DNA of heat shock promoter elements (HSE). The sequence is that of Heat stress transcription factor A-2a (HSFA2A) from Oryza sativa subsp. japonica (Rice).